A 2052-amino-acid chain; its full sequence is Unconventional myosin-X (2052 aa).

M1 carries the N-acetylmethionine modification. The Myosin motor domain maps to 63 to 739 (EGVDDMATLT…LEQKLEKRQE (677 aa)). ATP is bound by residues N104, Y113, 160 to 165 (GAGKTE), and N215. An actin-binding region spans residues 619-641 (LHSLMATLSASNPFFVRCIKPNM). IQ domains are found at residues 742 to 763 (VTRA…KQYK), 764 to 787 (KVLD…RFLH), and 788 to 817 (LKKA…EKRA). The segment at 814 to 884 (EKRAEEEKRK…LSRELEKQKE (71 aa)) is SAH. Residues 819 to 843 (EEKRKREEEEKRKREEEERERERER) are disordered. Residues 885–935 (NKQVEEILRLEKEIEDLQRMKERQELSLTEASLQKLQQLRDEELRRLEDEA) adopt a coiled-coil conformation. Phosphoserine is present on residues S963 and S966. The interval 964-1093 (VGSGCTGEQG…DYDQDDYEDG (130 aa)) is disordered. Residues 988–1003 (PEEEEVDEGFEADDDA) show a composition bias toward acidic residues. A compositionally biased stretch (polar residues) spans 1040-1049 (VVPTSPSADS). Acidic residues predominate over residues 1081–1092 (GDYDYDQDDYED). At T1152 the chain carries Phosphothreonine. PH domains are found at residues 1206-1304 (EALK…QVHA) and 1386-1491 (EFIV…NVTD). The MyTH4 domain occupies 1541–1689 (LPYGDINLNL…PSRDEIEALI (149 aa)). The FERM domain occupies 1694 to 2038 (MTSTVHCHGG…AYISMIVKKR (345 aa)).

Belongs to the TRAFAC class myosin-kinesin ATPase superfamily. Myosin family. As to quaternary structure, monomer, when in an inactive conformation in the cytosol. Homodimer in its active, membrane-bound conformation; antiparallel coiled coil-mediated dimer formation. Interacts with ECPAS. Interacts with NEO 1. Interacts with VASP. Interacts with DCC and ITGB5; the presence of DCC inhibits ITGB5 binding. Interacts with tubulin; ITGB5 or DCC binding inhibits tubulin binding. Interacts strongly with CALM3 and weakly with CALM, the CALM3 interaction is essential for function in filopodial extension and motility. Interacts with ITGB1, ITGB3 and ITGB5. In terms of tissue distribution, detected in kidney, testis, liver, kidney, cerebellum and brain cortex (at protein level).

It is found in the cytoplasm. The protein localises to the cytosol. It localises to the cell projection. The protein resides in the lamellipodium. Its subcellular location is the ruffle. It is found in the cytoskeleton. The protein localises to the filopodium tip. It localises to the cell cortex. The protein resides in the filopodium membrane. Its function is as follows. Myosins are actin-based motor molecules with ATPase activity. Unconventional myosins serve in intracellular movements. MYO10 binds to actin filaments and actin bundles and functions as a plus end-directed motor. Moves with higher velocity and takes larger steps on actin bundles than on single actin filaments. The tail domain binds to membranous compartments containing phosphatidylinositol 3,4,5-trisphosphate, which are then moved relative to actin filaments. Regulates cell shape, cell spreading and cell adhesion. Stimulates the formation and elongation of filopodia. In hippocampal neurons it induces the formation of dendritic filopodia by trafficking the actin-remodeling protein VASP to the tips of filopodia, where it promotes actin elongation. Plays a role in formation of the podosome belt in osteoclasts. The protein is Unconventional myosin-X (MYO10) of Bos taurus (Bovine).